We begin with the raw amino-acid sequence, 141 residues long: Hemoglobin subunit beta-C(NA) (141 aa).

The Globin domain occupies 1-141 (PBKALITGFW…VASALAHRYH (141 aa)). 2 residues coordinate heme b: H58 and H87.

Belongs to the globin family. As to quaternary structure, heterotetramer of two alpha chains and two beta chains. In terms of tissue distribution, red blood cells.

In terms of biological role, involved in oxygen transport from the lung to the various peripheral tissues. The polypeptide is Hemoglobin subunit beta-C(NA) (Ammotragus lervia (Barbary sheep)).